Reading from the N-terminus, the 177-residue chain is Protein C (177 aa).

The segment covering 1-10 has biased composition (polar residues); sequence MSTKAWNASR. A disordered region spans residues 1 to 38; sequence MSTKAWNASRLSGPDPSTPWSLRKPLQHGSRPPKGKRL.

This sequence belongs to the morbillivirus protein C family.

The sequence is that of Protein C (P/V/C) from Rinderpest virus (strain RBOK) (RDV).